A 156-amino-acid polypeptide reads, in one-letter code: ATP synthase subunit b (156 aa).

A helical transmembrane segment spans residues 7–29 (LLGQAISFLLFVWFCMKFVWPPL).

The protein belongs to the ATPase B chain family. In terms of assembly, F-type ATPases have 2 components, F(1) - the catalytic core - and F(0) - the membrane proton channel. F(1) has five subunits: alpha(3), beta(3), gamma(1), delta(1), epsilon(1). F(0) has three main subunits: a(1), b(2) and c(10-14). The alpha and beta chains form an alternating ring which encloses part of the gamma chain. F(1) is attached to F(0) by a central stalk formed by the gamma and epsilon chains, while a peripheral stalk is formed by the delta and b chains.

It is found in the cell inner membrane. In terms of biological role, f(1)F(0) ATP synthase produces ATP from ADP in the presence of a proton or sodium gradient. F-type ATPases consist of two structural domains, F(1) containing the extramembraneous catalytic core and F(0) containing the membrane proton channel, linked together by a central stalk and a peripheral stalk. During catalysis, ATP synthesis in the catalytic domain of F(1) is coupled via a rotary mechanism of the central stalk subunits to proton translocation. Component of the F(0) channel, it forms part of the peripheral stalk, linking F(1) to F(0). This Shewanella pealeana (strain ATCC 700345 / ANG-SQ1) protein is ATP synthase subunit b.